We begin with the raw amino-acid sequence, 186 residues long: uncharacterized protein (186 aa).

The first 21 residues, 1–21, serve as a signal peptide directing secretion; sequence MKFFLGSALFLILTFINLVRA. The Extracellular portion of the chain corresponds to 22–142; sequence EFEFITPAED…AFSVNPIDKK (121 aa). N-linked (GlcNAc...) asparagine glycosylation is found at asparagine 62, asparagine 75, asparagine 93, and asparagine 104. A helical transmembrane segment spans residues 143 to 163; it reads LAIGLSVGLSCCILIVLFLHF. Over 164 to 186 the chain is Cytoplasmic; the sequence is ATRRERRILKNEKELEMSSYRKH.

Its subcellular location is the membrane. This is an uncharacterized protein from Schizosaccharomyces pombe (strain 972 / ATCC 24843) (Fission yeast).